We begin with the raw amino-acid sequence, 1538 residues long: Myosin-9 (1538 aa).

Positions 16 to 65 (SIGSHVWFEDPEVAWIDGEVEKINGQEVVIQATTGKKVTAKLSKIYPKDV) constitute a Myosin N-terminal SH3-like domain. The 671-residue stretch at 70-740 (GGVDDMTKLS…QMAELDARRA (671 aa)) folds into the Myosin motor domain. ATP-binding positions include 164-171 (GESGAGKT) and 217-225 (NNNSSRFGK). Actin-binding regions lie at residues 503–537 (LIEK…YQTF), 539–562 (THKR…AGEV), 597–621 (FPPL…KLQL), and 621–643 (LQQL…KPNN). 6 IQ domains span residues 743-772 (LSSA…ATIS), 766-795 (LRKA…EAAA), 791-820 (REAA…ASLV), 814-843 (LHVA…TKAA), 839-868 (QTKA…GVVL), and 862-891 (LKNG…AARE). Residues 892 to 1064 (TGALKEAKDM…VLRQQAVSMA (173 aa)) are a coiled coil. Residues 1017–1032 (SLEDKKKKLEETEKKG) are compositionally biased toward basic and acidic residues. 2 disordered regions span residues 1017-1041 (SLED…SLTR) and 1098-1121 (SHSI…NEKQ). A Dilute domain is found at 1168–1481 (DRIIQTIGHA…IANMRVLMTE (314 aa)).

It belongs to the TRAFAC class myosin-kinesin ATPase superfamily. Myosin family. Plant myosin class XI subfamily. Homodimer.

Its function is as follows. Myosin heavy chain that is required for the cell cycle-regulated transport of various organelles and proteins for their segregation. Functions by binding with its tail domain to receptor proteins on organelles and exerting force with its N-terminal motor domain against actin filaments, thereby transporting its cargo along polarized actin cables. Involved in trafficking of Golgi stacks and mitochondria. The chain is Myosin-9 (XI-C) from Arabidopsis thaliana (Mouse-ear cress).